We begin with the raw amino-acid sequence, 1372 residues long: Putative Polyprotein CP (1372 aa).

2 coiled-coil regions span residues 126–153 and 299–350; these read NKEN…LKNI and EKQK…EELD. A disordered region spans residues 372-398; sequence SESSEINEISDNETEQISGSDSDYNNE. A compositionally biased stretch (polar residues) spans 386 to 398; it reads EQISGSDSDYNNE. A CCHC-type zinc finger spans residues 739–756; that stretch reads CKCYNCGEEGHISPNCKK. Positions 1162 to 1189 form a coiled coil; the sequence is DDRTNIQREKDQIEKADHNLELQKELNN.

Its subcellular location is the virion. This is Putative Polyprotein CP from Cassava vein mosaic virus (CsVMV).